The sequence spans 260 residues: Hydroxyethylthiazole kinase 1 (260 aa).

Met-39 is a binding site for substrate. Arg-115 and Thr-160 together coordinate ATP. Gly-187 provides a ligand contact to substrate.

This sequence belongs to the Thz kinase family. It depends on Mg(2+) as a cofactor.

The enzyme catalyses 5-(2-hydroxyethyl)-4-methylthiazole + ATP = 4-methyl-5-(2-phosphooxyethyl)-thiazole + ADP + H(+). The protein operates within cofactor biosynthesis; thiamine diphosphate biosynthesis; 4-methyl-5-(2-phosphoethyl)-thiazole from 5-(2-hydroxyethyl)-4-methylthiazole: step 1/1. Functionally, catalyzes the phosphorylation of the hydroxyl group of 4-methyl-5-beta-hydroxyethylthiazole (THZ). This Streptococcus pneumoniae (strain JJA) protein is Hydroxyethylthiazole kinase 1.